We begin with the raw amino-acid sequence, 411 residues long: S-adenosylmethionine synthase (411 aa).

H15 contributes to the ATP binding site. A Mg(2+)-binding site is contributed by D17. E43 contributes to the K(+) binding site. Residues E56 and Q99 each contribute to the L-methionine site. The flexible loop stretch occupies residues 99–109; sequence QSPDIAQGVDT. ATP contacts are provided by residues 174–176, 247–248, D256, 262–263, A279, and K283; these read DGK, RF, and RK. D256 contributes to the L-methionine binding site. K287 contacts L-methionine.

The protein belongs to the AdoMet synthase family. In terms of assembly, homotetramer; dimer of dimers. Requires Mg(2+) as cofactor. K(+) serves as cofactor.

It localises to the cytoplasm. It carries out the reaction L-methionine + ATP + H2O = S-adenosyl-L-methionine + phosphate + diphosphate. Its pathway is amino-acid biosynthesis; S-adenosyl-L-methionine biosynthesis; S-adenosyl-L-methionine from L-methionine: step 1/1. Functionally, catalyzes the formation of S-adenosylmethionine (AdoMet) from methionine and ATP. The overall synthetic reaction is composed of two sequential steps, AdoMet formation and the subsequent tripolyphosphate hydrolysis which occurs prior to release of AdoMet from the enzyme. The sequence is that of S-adenosylmethionine synthase from Streptomyces spectabilis.